Consider the following 447-residue polypeptide: Exodeoxyribonuclease 7 large subunit (447 aa).

The protein belongs to the XseA family. As to quaternary structure, heterooligomer composed of large and small subunits.

Its subcellular location is the cytoplasm. It catalyses the reaction Exonucleolytic cleavage in either 5'- to 3'- or 3'- to 5'-direction to yield nucleoside 5'-phosphates.. In terms of biological role, bidirectionally degrades single-stranded DNA into large acid-insoluble oligonucleotides, which are then degraded further into small acid-soluble oligonucleotides. The polypeptide is Exodeoxyribonuclease 7 large subunit (Lactiplantibacillus plantarum (strain ATCC BAA-793 / NCIMB 8826 / WCFS1) (Lactobacillus plantarum)).